The chain runs to 219 residues: 2-hydroxy-3-keto-5-methylthiopentenyl-1-phosphate phosphatase (219 aa).

The protein belongs to the HAD-like hydrolase superfamily. MtnX family.

It carries out the reaction 2-hydroxy-5-methylsulfanyl-3-oxopent-1-enyl phosphate + H2O = 1,2-dihydroxy-5-(methylsulfanyl)pent-1-en-3-one + phosphate. The protein operates within amino-acid biosynthesis; L-methionine biosynthesis via salvage pathway; L-methionine from S-methyl-5-thio-alpha-D-ribose 1-phosphate: step 4/6. Dephosphorylates 2-hydroxy-3-keto-5-methylthiopentenyl-1-phosphate (HK-MTPenyl-1-P) yielding 1,2-dihydroxy-3-keto-5-methylthiopentene (DHK-MTPene). This is 2-hydroxy-3-keto-5-methylthiopentenyl-1-phosphate phosphatase from Bacillus thuringiensis (strain Al Hakam).